Reading from the N-terminus, the 79-residue chain is Small ribosomal subunit protein bS18c (79 aa).

It belongs to the bacterial ribosomal protein bS18 family. In terms of assembly, part of the 30S ribosomal subunit.

Its subcellular location is the plastid. It is found in the chloroplast. This Chaetosphaeridium globosum (Charophycean green alga) protein is Small ribosomal subunit protein bS18c.